An 81-amino-acid chain; its full sequence is Large ribosomal subunit protein bL27 (81 aa).

Over residues 1 to 11 (MATSKSGGSSK) the composition is skewed to polar residues. Positions 1-20 (MATSKSGGSSKNGRDSISKR) are disordered.

The protein belongs to the bacterial ribosomal protein bL27 family.

This Borreliella afzelii (strain PKo) (Borrelia afzelii) protein is Large ribosomal subunit protein bL27.